The primary structure comprises 267 residues: MQEFTNPFPIDSSSLIHCMTNEISCEMLANGILALGCKPVMADDPREVLDFTKQSQALFINLGHLSAEKEKAIRIAASYAAQVCLPMVVDAVGVTTSSIRKSLVKDLLDYRPTVLKGNMSEIRSLVGLKHHGVGVDASAKDQETEDLLQVLKDWCQTYPGMSFLVTGPKDLIVSENQVAVLENGCTELDWITGTGDLVGALTAVFLSQGKTGFEASCLAVSYLNIAAEKIVVQGMGLEEFRYQVLNQLSLLRRDENWLDTIKGEAYE.

Met41 lines the substrate pocket. Residues Lys116 and Thr166 each contribute to the ATP site. Gly193 serves as a coordination point for substrate.

This sequence belongs to the Thz kinase family. The cofactor is Mg(2+).

It catalyses the reaction 5-(2-hydroxyethyl)-4-methylthiazole + ATP = 4-methyl-5-(2-phosphooxyethyl)-thiazole + ADP + H(+). It functions in the pathway cofactor biosynthesis; thiamine diphosphate biosynthesis; 4-methyl-5-(2-phosphoethyl)-thiazole from 5-(2-hydroxyethyl)-4-methylthiazole: step 1/1. Catalyzes the phosphorylation of the hydroxyl group of 4-methyl-5-beta-hydroxyethylthiazole (THZ). The sequence is that of Hydroxyethylthiazole kinase 2 from Streptococcus pneumoniae (strain Taiwan19F-14).